Here is a 105-residue protein sequence, read N- to C-terminus: Thioredoxin (105 aa).

The region spanning 2-105 is the Thioredoxin domain; that stretch reads VKQIESKTAF…KLEATINELV (104 aa). N6-acetyllysine is present on Lys3. An N6-succinyllysine modification is found at Lys8. Residues Cys32 and Cys35 each act as nucleophile in the active site. An intrachain disulfide couples Cys32 to Cys35. An N6-acetyllysine modification is found at Lys39. Residues Cys62 and Cys69 each carry the S-nitrosocysteine modification. Cys73 is subject to S-nitrosocysteine; alternate. Lys94 carries the N6-acetyllysine; alternate modification. Lys94 bears the N6-succinyllysine; alternate mark.

It belongs to the thioredoxin family. Homodimer; disulfide-linked. Interacts with TXNIP through the redox-active site. Interacts with MAP3K5 and CASP3. In case of infection, interacts with S.typhimurium protein slrP. Interacts with APEX1; the interaction stimulates the FOS/JUN AP-1 DNA-binding activity in a redox-dependent manner. In the fully reduced protein, both Cys-69 and Cys-73 are nitrosylated in response to nitric oxide (NO). When two disulfide bonds are present in the protein, only Cys-73 is nitrosylated. Cys-73 can serve as donor for nitrosylation of target proteins. Post-translationally, in case of infection, ubiquitinated by S.typhimurium protein slrP, leading to its degradation.

The protein localises to the nucleus. It localises to the cytoplasm. It is found in the secreted. In terms of biological role, participates in various redox reactions through the reversible oxidation of its active center dithiol to a disulfide and catalyzes dithiol-disulfide exchange reactions. Plays a role in the reversible S-nitrosylation of cysteine residues in target proteins, and thereby contributes to the response to intracellular nitric oxide. Nitrosylates the active site Cys of CASP3 in response to nitric oxide (NO), and thereby inhibits caspase-3 activity. Induces the FOS/JUN AP-1 DNA-binding activity in ionizing radiation (IR) cells through its oxidation/reduction status and stimulates AP-1 transcriptional activity. ADF augments the expression of the interleukin-2 receptor TAC (IL2R/P55). The protein is Thioredoxin (TXN) of Homo sapiens (Human).